The chain runs to 85 residues: Large ribosomal subunit protein bL31B (85 aa).

This sequence belongs to the bacterial ribosomal protein bL31 family. Type B subfamily. In terms of assembly, part of the 50S ribosomal subunit.

This Kocuria rhizophila (strain ATCC 9341 / DSM 348 / NBRC 103217 / DC2201) protein is Large ribosomal subunit protein bL31B.